Reading from the N-terminus, the 473-residue chain is Serine palmitoyltransferase 1 (473 aa).

Over 1–15 (MATATEQWVLVEMVQ) the chain is Lumenal. Residues 1 to 66 (MATATEQWVL…KEELIEEWQP (66 aa)) form an interaction with SPTLC2 region. The helical transmembrane segment at 16 to 36 (ALYEAPAYHLILEGILILWII) threads the bilayer. Topologically, residues 37–473 (RLLFSKTYKL…IKEVAQAVLL (437 aa)) are cytoplasmic. Y164 carries the post-translational modification Phosphotyrosine; by ABL.

This sequence belongs to the class-II pyridoxal-phosphate-dependent aminotransferase family. As to quaternary structure, component of the serine palmitoyltransferase (SPT) complex, which is also composed of SPTLC2 or SPTLC3 and SPTSSA or SPTSSB. The heterodimer consisting of SPTLC1 and SPTLC2/SPTLC3 forms the catalytic core of the enzyme, while SPTSSA or SPTSSB subunits determine substrate specificity. SPT also interacts with ORMDL proteins, especially ORMDL3, which negatively regulate SPT activity in the presence of ceramides. Forms dimers of heterodimers with SPTLC2. Interacts with RTN4 (isoform B). Pyridoxal 5'-phosphate is required as a cofactor. In terms of processing, phosphorylation at Tyr-164 inhibits activity and promotes cell survival. Widely expressed. Not detected in small intestine.

It is found in the endoplasmic reticulum membrane. It catalyses the reaction L-serine + hexadecanoyl-CoA + H(+) = 3-oxosphinganine + CO2 + CoA. It carries out the reaction octadecanoyl-CoA + L-serine + H(+) = 3-oxoeicosasphinganine + CO2 + CoA. The catalysed reaction is tetradecanoyl-CoA + L-serine + H(+) = 3-oxohexadecasphinganine + CO2 + CoA. The enzyme catalyses dodecanoyl-CoA + L-serine + H(+) = 3-oxotetradecasphinganine + CO2 + CoA. It functions in the pathway lipid metabolism; sphingolipid metabolism. Its activity is regulated as follows. SPT complex catalytic activity is negatively regulated by ORMDL proteins, including ORMDL3, in the presence of ceramides. This mechanism allows to maintain ceramide levels at sufficient concentrations for the production of complex sphingolipids, but which prevents the accumulation of ceramides to levels that trigger apoptosis. Its function is as follows. Component of the serine palmitoyltransferase multisubunit enzyme (SPT) that catalyzes the initial and rate-limiting step in sphingolipid biosynthesis by condensing L-serine and activated acyl-CoA (most commonly palmitoyl-CoA) to form long-chain bases. The SPT complex is also composed of SPTLC2 or SPTLC3 and SPTSSA or SPTSSB. Within this complex, the heterodimer with SPTLC2 or SPTLC3 forms the catalytic core. The composition of the serine palmitoyltransferase (SPT) complex determines the substrate preference. The SPTLC1-SPTLC2-SPTSSA complex shows a strong preference for C16-CoA substrate, while the SPTLC1-SPTLC3-SPTSSA isozyme uses both C14-CoA and C16-CoA as substrates, with a slight preference for C14-CoA. The SPTLC1-SPTLC2-SPTSSB complex shows a strong preference for C18-CoA substrate, while the SPTLC1-SPTLC3-SPTSSB isozyme displays an ability to use a broader range of acyl-CoAs, without apparent preference. Required for adipocyte cell viability and metabolic homeostasis. This chain is Serine palmitoyltransferase 1 (SPTLC1), found in Homo sapiens (Human).